Here is a 69-residue protein sequence, read N- to C-terminus: Cytochrome c oxidase subunit 8A, mitochondrial (69 aa).

Residues 1-25 (MSVLTSLLLRGLTGSARRLPVPRAK) constitute a mitochondrion transit peptide. Residues 26–36 (VHSMPPEEELG) are Mitochondrial matrix-facing. The chain crosses the membrane as a helical span at residues 37–60 (IMEKAIGLTFCFVSLFLPAGWILS). Topologically, residues 61-69 (HLEDYKRPE) are mitochondrial intermembrane.

This sequence belongs to the cytochrome c oxidase VIII family. In terms of assembly, component of the cytochrome c oxidase (complex IV, CIV), a multisubunit enzyme composed of 14 subunits. The complex is composed of a catalytic core of 3 subunits MT-CO1, MT-CO2 and MT-CO3, encoded in the mitochondrial DNA, and 11 supernumerary subunits COX4I, COX5A, COX5B, COX6A, COX6B, COX6C, COX7A, COX7B, COX7C, COX8 and NDUFA4, which are encoded in the nuclear genome. The complex exists as a monomer or a dimer and forms supercomplexes (SCs) in the inner mitochondrial membrane with NADH-ubiquinone oxidoreductase (complex I, CI) and ubiquinol-cytochrome c oxidoreductase (cytochrome b-c1 complex, complex III, CIII), resulting in different assemblies (supercomplex SCI(1)III(2)IV(1) and megacomplex MCI(2)III(2)IV(2)). In response to mitochondrial stress, the precursor protein is ubiquitinated by the SIFI complex in the cytoplasm before mitochondrial import, leading to its degradation. Within the SIFI complex, UBR4 initiates ubiquitin chain that are further elongated or branched by KCMF1.

The protein resides in the mitochondrion inner membrane. Its pathway is energy metabolism; oxidative phosphorylation. In terms of biological role, component of the cytochrome c oxidase, the last enzyme in the mitochondrial electron transport chain which drives oxidative phosphorylation. The respiratory chain contains 3 multisubunit complexes succinate dehydrogenase (complex II, CII), ubiquinol-cytochrome c oxidoreductase (cytochrome b-c1 complex, complex III, CIII) and cytochrome c oxidase (complex IV, CIV), that cooperate to transfer electrons derived from NADH and succinate to molecular oxygen, creating an electrochemical gradient over the inner membrane that drives transmembrane transport and the ATP synthase. Cytochrome c oxidase is the component of the respiratory chain that catalyzes the reduction of oxygen to water. Electrons originating from reduced cytochrome c in the intermembrane space (IMS) are transferred via the dinuclear copper A center (CU(A)) of subunit 2 and heme A of subunit 1 to the active site in subunit 1, a binuclear center (BNC) formed by heme A3 and copper B (CU(B)). The BNC reduces molecular oxygen to 2 water molecules using 4 electrons from cytochrome c in the IMS and 4 protons from the mitochondrial matrix. The protein is Cytochrome c oxidase subunit 8A, mitochondrial (COX8A) of Macaca fascicularis (Crab-eating macaque).